Reading from the N-terminus, the 66-residue chain is Large ribosomal subunit protein uL29 (66 aa).

This sequence belongs to the universal ribosomal protein uL29 family.

The chain is Large ribosomal subunit protein uL29 from Thermosipho africanus (strain TCF52B).